Consider the following 131-residue polypeptide: Histone H2A.1 (131 aa).

Ser2 carries the N-acetylserine modification. N6-acetyllysine occurs at positions 5 and 8. Gln106 is modified (N5-methylglutamine). The residue at position 128 (Ser128) is a Phosphoserine. Positions 128-129 (SQ) match the [ST]-Q motif motif.

Belongs to the histone H2A family. As to quaternary structure, the nucleosome is a histone octamer containing two molecules each of H2A, H2B, H3 and H4 assembled in one H3-H4 heterotetramer and two H2A-H2B heterodimers. The octamer wraps approximately 147 bp of DNA. In terms of processing, phosphorylated to form H2AS128ph (gamma-H2A) in response to DNA double-strand breaks (DSBs) generated by exogenous genotoxic agents and by stalled replication forks. Phosphorylation is dependent on the DNA damage checkpoint kinases MEC1/ATR and TEL1/ATM, spreads on either side of a detected DSB site and may mark the surrounding chromatin for recruitment of proteins required for DNA damage signaling and repair. Gamma-H2A is removed from the DNA prior to the strand invasion-primer extension step of the repair process and subsequently dephosphorylated by PPH3, a component of the histone H2A phosphatase complex (HTP-C). Dephosphorylation is necessary for efficient recovery from the DNA damage checkpoint. Acetylated by ESA1 to form H2AK4ac and H2AK7ac.

The protein resides in the nucleus. Its subcellular location is the chromosome. Functionally, core component of nucleosome which plays a central role in DNA double strand break (DSB) repair. Nucleosomes wrap and compact DNA into chromatin, limiting DNA accessibility to the cellular machineries which require DNA as a template. Histones thereby play a central role in transcription regulation, DNA repair, DNA replication and chromosomal stability. DNA accessibility is regulated via a complex set of post-translational modifications of histones, also called histone code, and nucleosome remodeling. The polypeptide is Histone H2A.1 (HTA1) (Candida glabrata (strain ATCC 2001 / BCRC 20586 / JCM 3761 / NBRC 0622 / NRRL Y-65 / CBS 138) (Yeast)).